We begin with the raw amino-acid sequence, 414 residues long: MTQANLSETLFKPRFKHPETSTLVRRFNHGAQPPVQSALDGKTIPHWYRMINRLMWIWRGIDPREILDVQARIVMSDAERTDDDLYDTVIGYRGGNWIYEWATQAMVWQQKACAEEDPQLSGRHWLHAATLYNIAAYPHLKGDDLAEQAQALSNRAYEEAAQRLPGTMRQMEFTVPGGAPITGFLHMPKGDGPFPTVLMCGGLDAMQTDYYSLYERYFAPRGIAMLTIDMPSVGFSSKWKLTQDSSLLHQHVLKALPNVPWVDHTRVAAFGFRFGANVAVRLAYLESPRLKAVACLGPVVHTLLSDFKCQQQVPEMYLDVLASRLGMHDASDEALRVELNRYSLKVQGLLGRRCPTPMLSGYWKNDPFSPEEDSRLITSSTADGKLLEIPFNPVYRNFDKGLQEITDWIEKRLC.

It belongs to the FrsA family.

The catalysed reaction is a carboxylic ester + H2O = an alcohol + a carboxylate + H(+). Functionally, catalyzes the hydrolysis of esters. This chain is Esterase FrsA, found in Escherichia coli O17:K52:H18 (strain UMN026 / ExPEC).